The primary structure comprises 157 residues: SsrA-binding protein (157 aa).

This sequence belongs to the SmpB family.

The protein resides in the cytoplasm. Required for rescue of stalled ribosomes mediated by trans-translation. Binds to transfer-messenger RNA (tmRNA), required for stable association of tmRNA with ribosomes. tmRNA and SmpB together mimic tRNA shape, replacing the anticodon stem-loop with SmpB. tmRNA is encoded by the ssrA gene; the 2 termini fold to resemble tRNA(Ala) and it encodes a 'tag peptide', a short internal open reading frame. During trans-translation Ala-aminoacylated tmRNA acts like a tRNA, entering the A-site of stalled ribosomes, displacing the stalled mRNA. The ribosome then switches to translate the ORF on the tmRNA; the nascent peptide is terminated with the 'tag peptide' encoded by the tmRNA and targeted for degradation. The ribosome is freed to recommence translation, which seems to be the essential function of trans-translation. The chain is SsrA-binding protein from Lacticaseibacillus paracasei (strain ATCC 334 / BCRC 17002 / CCUG 31169 / CIP 107868 / KCTC 3260 / NRRL B-441) (Lactobacillus paracasei).